Here is a 170-residue protein sequence, read N- to C-terminus: Heat shock protein beta-7 (170 aa).

The tract at residues 1–39 (MSHRTSSTFRAERSFHSSSSSSSSSTSSSASRALPAQDP) is disordered. The interval 1–71 (MSHRTSSTFR…PLAFPARPGG (71 aa)) is required for localization to SC35 splicing speckles. The segment covering 16–31 (HSSSSSSSSSTSSSAS) has biased composition (low complexity). A sHSP domain is found at 62 to 170 (PLAFPARPGG…QQTFRTEIKI (109 aa)).

The protein belongs to the small heat shock protein (HSP20) family. As to quaternary structure, interacts with C-terminal domain of actin-binding protein 280. As to expression, isoform 1 is highly expressed in adult and fetal heart, skeletal muscle, and at a much lower levels in adipose tissue and in aorta. Undetectable in other tissues. Isoform 2 and isoform 3 are poorly detected in heart.

It is found in the cytoplasm. The protein resides in the nucleus. It localises to the cajal body. This is Heat shock protein beta-7 (HSPB7) from Homo sapiens (Human).